Consider the following 228-residue polypeptide: MLLHIKQVLTSEELREARGILADAPWGDGRITAGSQSAHAKNNEQLREDCEETRALQQLLLRGLERHQLFFSAALPKQISPPLFNRYGGASNSFGNHVDSAVRFLRDGSGRVRTDISCTLFLAGPDEYDGGELVIEDTFGVQRVKLPAGDMVLYPGTSVHRVLPVTRGYRTASYFWIQSMVRSDEQRRLLFEMDNHLRHLRSQYGETDSGVIGLTSTYHNLLRMWLDV.

The region spanning 78 to 179 is the Fe2OG dioxygenase domain; the sequence is QISPPLFNRY…RTASYFWIQS (102 aa). The Fe cation site is built by H97, D99, and H160. A 2-oxoglutarate-binding site is contributed by R170.

Requires Fe(2+) as cofactor. L-ascorbate serves as cofactor.

This is PKHD-type hydroxylase Vapar_1809 from Variovorax paradoxus (strain S110).